We begin with the raw amino-acid sequence, 570 residues long: Proline--tRNA ligase (570 aa).

The protein belongs to the class-II aminoacyl-tRNA synthetase family. ProS type 1 subfamily. Homodimer.

Its subcellular location is the cytoplasm. The enzyme catalyses tRNA(Pro) + L-proline + ATP = L-prolyl-tRNA(Pro) + AMP + diphosphate. Its function is as follows. Catalyzes the attachment of proline to tRNA(Pro) in a two-step reaction: proline is first activated by ATP to form Pro-AMP and then transferred to the acceptor end of tRNA(Pro). As ProRS can inadvertently accommodate and process non-cognate amino acids such as alanine and cysteine, to avoid such errors it has two additional distinct editing activities against alanine. One activity is designated as 'pretransfer' editing and involves the tRNA(Pro)-independent hydrolysis of activated Ala-AMP. The other activity is designated 'posttransfer' editing and involves deacylation of mischarged Ala-tRNA(Pro). The misacylated Cys-tRNA(Pro) is not edited by ProRS. The sequence is that of Proline--tRNA ligase from Desulfotalea psychrophila (strain LSv54 / DSM 12343).